Reading from the N-terminus, the 151-residue chain is Thymosin beta (151 aa).

Repeat copies occupy residues 24–29, 62–67, 100–105, and 134–139. A 4 X 6 AA repeat of L-[KH]-[KSH]-[VT]-[EP]-[TV] region spans residues 24 to 139; sequence LKKVETTEKN…DKSALHHVET (116 aa).

It belongs to the thymosin beta family. Interacts (via repeats 1, 2 and 4) with G-actin in a 1:3 ratio. Interacts (via repeats 2 and 3) with F-actin. In terms of tissue distribution, at the comma stage, enriched in the developing nerve ring (at protein level). Ubiquitously expressed in larvae and adults with enrichment in the spermatheca, the intestinal tract and the posterior bulb of the pharynx (at protein level). Expressed in oocytes and in the gonad (at protein level).

It is found in the cytoplasm. It localises to the cell cortex. The protein resides in the cell junction. The protein localises to the cytoskeleton. Its function is as follows. Plays an important role in the organization of the cytoskeleton by regulating actin polymerization in two ways. Firstly, by binding to and sequestering actin monomers (G actin) inhibits actin polymerization. Secondly, by binding directly filamentous actin (F actin) promotes actin polymerization. Regulates the formation of cortical actin in oocytes conferring them enough rigidity to sustain the contractions during ovulation. This is Thymosin beta from Caenorhabditis elegans.